A 652-amino-acid chain; its full sequence is Leucine-rich repeat-containing protein 4 (652 aa).

An N-terminal signal peptide occupies residues 1 to 40 (MKLLWQVTVHHTWNAVLLPVVYLTAQVWILCAAIAAAASA). The 34-residue stretch at 41–74 (GPQNCPSVCSCSNQFSKVVCTRRGLSEVPQGIPS) folds into the LRRNT domain. Residues 41 to 526 (GPQNCPSVCS…SLDEVMKTTK (486 aa)) are Extracellular-facing. Intrachain disulfides connect cysteine 45/cysteine 51 and cysteine 49/cysteine 60. LRR repeat units lie at residues 75–96 (NTRYLNLMENNIQMIQADTFRH), 99–120 (HLEVLQLGRNSIRQIEVGAFNG), 123–144 (SLNTLELFDNWLTVIPSGAFEY), 147–168 (KLRELWLRNNPIESIPSYAFNR), 171–193 (SLMRLDLGELKKLEYISEGAFEG), 196–217 (NLKYLNLGMCNIKDMPNLTPLV), 218–239 (GLEELEMSGNHFPEIRPGSFHG), 242–263 (SLKKLWVMNSQVSLIERNAFDG), and 266–287 (SLVELNLAHNNLSSLPHDLFTP). Residues asparagine 276, asparagine 321, asparagine 362, asparagine 387, asparagine 409, asparagine 433, asparagine 439, and asparagine 449 are each glycosylated (N-linked (GlcNAc...) asparagine). The region spanning 299–351 (NPWNCDCDILWLAWWLREYIPTNSTCCGRCHAPMHMRGRYLVEVDQAAFQCSA) is the LRRCT domain. Intrachain disulfides connect cysteine 303–cysteine 328 and cysteine 305–cysteine 349. One can recognise an Ig-like domain in the interval 352–441 (PFIMDAPRDL…SNASAYLNVS (90 aa)). Cysteines 373 and 423 form a disulfide. A helical membrane pass occupies residues 527–547 (IIIGCFVAVTLLAAAMLIVFY). The Cytoplasmic segment spans residues 548–652 (KLRKRHQQRS…TKDKVQETQI (105 aa)).

In terms of assembly, interacts (via LRR repeats) with NTNG2. Interacts with DLG4. Forms a complex with DLG4 and with NMDA receptors. Post-translationally, N-glycosylated. In terms of tissue distribution, specifically expressed in brain. In the hippocampus, parietal cortex and piriform cortex expressed in proximal segments of CA1 pyramidal neurons.

It localises to the membrane. The protein localises to the postsynaptic cell membrane. Its function is as follows. Synaptic adhesion protein. Regulates the formation of exitatory synapses through the recruitment of pre-and-postsynaptic proteins. Organize the lamina/pathway-specific differentiation of dendrites. Plays an important role for auditory synaptic responses. Involved in the suppression of glioma. This Mus musculus (Mouse) protein is Leucine-rich repeat-containing protein 4 (Lrrc4).